Here is a 177-residue protein sequence, read N- to C-terminus: GTP-dependent dephospho-CoA kinase (177 aa).

Positions 48, 49, 50, 67, 69, 124, and 147 each coordinate GTP.

The protein belongs to the GTP-dependent DPCK family.

It carries out the reaction 3'-dephospho-CoA + GTP = GDP + CoA + H(+). The protein operates within cofactor biosynthesis; coenzyme A biosynthesis. In terms of biological role, catalyzes the GTP-dependent phosphorylation of the 3'-hydroxyl group of dephosphocoenzyme A to form coenzyme A (CoA). This is GTP-dependent dephospho-CoA kinase from Thermococcus onnurineus (strain NA1).